Reading from the N-terminus, the 241-residue chain is Zinc finger CCHC domain-containing protein 17 (241 aa).

One can recognise an S1 motif domain in the interval 16 to 88; the sequence is YTIFQGEVAM…DRIKVSLSMK (73 aa). Ser-114 carries the phosphoserine modification. The CCHC-type zinc finger occupies 131-148; the sequence is TTCKKCGCKGHFAKDCFM. Lys-144 bears the N6-acetyllysine mark. The interval 160–241 is disordered; that stretch reads EEEEEKEEAK…KKKHKKKHKE (82 aa). Over residues 166–178 the composition is skewed to basic and acidic residues; it reads EEAKAEGLEKPDP. Residues 182-198 show a composition bias toward basic residues; it reads SSRKRKKEKKKKKHRDR. Phosphoserine is present on Ser-183. Residues 211–225 are compositionally biased toward basic and acidic residues; that stretch reads DTGKKARHSSKDSKA. Basic residues predominate over residues 226 to 241; it reads TKKKKKKKKHKKKHKE.

As to quaternary structure, interacts with PNN. Associates with the 60S ribosomal subunit. In terms of tissue distribution, expressed in liver, brain, heart, kidney testis, stomach, small intestine, skin, thymus, uterus, placenta, spleen, lung and skeletal muscle.

It localises to the nucleus. The protein resides in the nucleolus. This chain is Zinc finger CCHC domain-containing protein 17 (Zcchc17), found in Mus musculus (Mouse).